The chain runs to 339 residues: Delta(9)-fatty-acid desaturase fat-6 (339 aa).

A run of 4 helical transmembrane segments spans residues 52-72 (VALF…LIFE), 77-97 (TVIF…AGAH), 195-215 (YFPL…VYFW), and 219-241 (AFIA…TWCI).

Belongs to the fatty acid desaturase type 1 family. As to expression, expressed in the intestine in adult worms and in all four larval stages. Additional expression in the hypodermis in all life stages.

It localises to the membrane. It catalyses the reaction octadecanoyl-CoA + 2 Fe(II)-[cytochrome b5] + O2 + 2 H(+) = (9Z)-octadecenoyl-CoA + 2 Fe(III)-[cytochrome b5] + 2 H2O. The catalysed reaction is hexadecanoyl-CoA + 2 Fe(II)-[cytochrome b5] + O2 + 2 H(+) = (9Z)-hexadecenoyl-CoA + 2 Fe(III)-[cytochrome b5] + 2 H2O. It carries out the reaction heptadecanoyl-CoA + 2 Fe(II)-[cytochrome b5] + O2 + 2 H(+) = (9Z)-heptadecenoyl-CoA + 2 Fe(III)-[cytochrome b5] + 2 H2O. The enzyme catalyses (11E)-octadecenoyl-CoA + 2 Fe(II)-[cytochrome b5] + O2 + 2 H(+) = (9Z,11E)-octadecadienoyl-CoA + 2 Fe(III)-[cytochrome b5] + 2 H2O. The protein operates within lipid metabolism; monounsaturated fatty acid biosynthesis. Its pathway is lipid metabolism; fatty acid metabolism. Functionally, delta(9)-fatty acid desaturase that acts preferentially on stearoyl-CoA (octadecanoyl-CoA) producing the monounsaturated oleoyl-CoA ((9Z)-octadecenoyl-CoA), one of the most abundant monounsaturated fatty acid in Caenorhabditis elegans phospholipids and triacylglycerols. Also acts on palmitoyl-CoA (hexadecanoyl-CoA), heptadecanoyl-CoA and (11E)-octadecenoyl-CoA (trans-vaccenoyl-CoA), the monounsaturated fatty acids (MUFAs) produced are further used as substrates to synthesize polyunsaturated fatty acids (PUFAs) by several other desaturases and elongases. Unlike plants, Caenorhabditis elegans desaturases seem to use fatty acyl-CoAs as substrates. The polypeptide is Delta(9)-fatty-acid desaturase fat-6 (fat-6) (Caenorhabditis elegans).